The chain runs to 2995 residues: Striated muscle preferentially expressed protein kinase (2995 aa).

In terms of domain architecture, Ig-like 1 spans 27–109; that stretch reads PPVFLRKLKW…GEARTSAVLA (83 aa). Cysteine 50 and cysteine 93 are disulfide-bonded. Disordered regions lie at residues 250-272 and 384-467; these read ITGS…KVSQ and LTQT…NSKP. Polar residues predominate over residues 384 to 404; sequence LTQTDKQSSVSTESVPTQVIQ. The span at 454 to 464 shows a compositional bias: low complexity; it reads PPEMNENQENN. Ig-like domains follow at residues 613–701 and 714–802; these read PAES…EELI and PLFT…AELY. Cysteine 639 and cysteine 691 are oxidised to a cystine. Positions 815 to 834 are disordered; it reads SRLEKMPSIPEEPEVPEGEV. An Ig-like 4 domain is found at 840–930; it reads PDFIKPLSDL…AACYAHLYVA (91 aa). A disulfide bond links cysteine 861 and cysteine 912. The Fibronectin type-III 1 domain maps to 937–1035; that stretch reads PDGPPVIESV…TDLVQLVDRG (99 aa). The Ig-like 5 domain maps to 1135–1224; sequence PPIFETIMED…GSVSCKAELT (90 aa). In terms of domain architecture, Protein kinase 1 spans 1255–1505; that stretch reads YDIHKEIGRG…ATECLLHPWF (251 aa). ATP-binding positions include 1261 to 1269 and lysine 1283; that span reads IGRGAFSYV. The active-site Proton acceptor is aspartate 1372. Disordered regions lie at residues 1559–1582, 1776–1839, 2017–2058, 2163–2189, 2211–2254, and 2268–2322; these read VPRN…DIDE, RNFR…STGD, LKRL…TGLK, VHSR…VEKQ, SGIS…KMDI, and SKET…KEDF. The span at 1786–1795 shows a compositional bias: polar residues; that stretch reads SGDSGTFNND. Over residues 2274-2284 the composition is skewed to low complexity; that stretch reads SSSSAHSIESS. Basic and acidic residues predominate over residues 2289-2299; it reads TEIRSRWDRWG. One can recognise an Ig-like 6 domain in the interval 2323–2413; that stretch reads PPVFHIALKD…ASVTTSCILT (91 aa). Residues cysteine 2345 and cysteine 2397 are joined by a disulfide bond. The Fibronectin type-III 2 domain maps to 2420-2513; the sequence is CPGTPEIRQI…DGVSIDTKVT (94 aa). Disordered regions lie at residues 2574–2609 and 2648–2676; these read PKMS…YTAP and GEGA…LRQG. Polar residues-rich tracts occupy residues 2587–2605 and 2652–2674; these read SSVN…SPRS and SSPT…TTLR. The Protein kinase 2 domain maps to 2682–2934; that stretch reads YSFLDEKARG…IKDCLNHSWL (253 aa). Residues 2688–2696 and lysine 2711 each bind ATP; that span reads KARGRFGVI. Aspartate 2801 (proton acceptor) is an active-site residue.

It belongs to the protein kinase superfamily. CAMK Ser/Thr protein kinase family. In terms of processing, may be autophosphorylated. Preferentially expressed in striated muscle.

It is found in the nucleus. The catalysed reaction is L-seryl-[protein] + ATP = O-phospho-L-seryl-[protein] + ADP + H(+). It carries out the reaction L-threonyl-[protein] + ATP = O-phospho-L-threonyl-[protein] + ADP + H(+). The polypeptide is Striated muscle preferentially expressed protein kinase (speg) (Danio rerio (Zebrafish)).